Reading from the N-terminus, the 240-residue chain is MLLGVNIDHVATLRQARGTRYPDPVKAALDAEEAGADGITVHLREDRRHIQERDVVLLKDVLQTRMNFEMGVTEEMMAFAEKIRPAHICLVPETRQELTTEGGLDVAGQEARIKAAVERLARTGAEVSLFIDADERQIEASRRVGAPAIELHTGRYADAETPTEVAEELQRIVEGVAFGVGHGLIVNAGHGLHYHNVEAVAAIKGINELNIGHALVAHALFVGFKAAVAEMKALIVAASR.

Asn6 is a 3-amino-2-oxopropyl phosphate binding site. Residue 8-9 coordinates 1-deoxy-D-xylulose 5-phosphate; it reads DH. Position 17 (Arg17) interacts with 3-amino-2-oxopropyl phosphate. The active-site Proton acceptor is the His42. 1-deoxy-D-xylulose 5-phosphate-binding residues include Arg44 and His49. The active-site Proton acceptor is the Glu69. Residue Thr99 coordinates 1-deoxy-D-xylulose 5-phosphate. His190 serves as the catalytic Proton donor. 3-amino-2-oxopropyl phosphate is bound by residues Gly191 and 212 to 213; that span reads GH.

Belongs to the PNP synthase family. As to quaternary structure, homooctamer; tetramer of dimers.

The protein resides in the cytoplasm. The enzyme catalyses 3-amino-2-oxopropyl phosphate + 1-deoxy-D-xylulose 5-phosphate = pyridoxine 5'-phosphate + phosphate + 2 H2O + H(+). It functions in the pathway cofactor biosynthesis; pyridoxine 5'-phosphate biosynthesis; pyridoxine 5'-phosphate from D-erythrose 4-phosphate: step 5/5. In terms of biological role, catalyzes the complicated ring closure reaction between the two acyclic compounds 1-deoxy-D-xylulose-5-phosphate (DXP) and 3-amino-2-oxopropyl phosphate (1-amino-acetone-3-phosphate or AAP) to form pyridoxine 5'-phosphate (PNP) and inorganic phosphate. The polypeptide is Pyridoxine 5'-phosphate synthase (Pseudomonas putida (strain ATCC 700007 / DSM 6899 / JCM 31910 / BCRC 17059 / LMG 24140 / F1)).